The chain runs to 402 residues: Argininosuccinate synthase (402 aa).

9–17 (AYSGGLDTS) serves as a coordination point for ATP. Position 87 (tyrosine 87) interacts with L-citrulline. Glycine 117 serves as a coordination point for ATP. Threonine 119, asparagine 123, and aspartate 124 together coordinate L-aspartate. Asparagine 123 contributes to the L-citrulline binding site. 5 residues coordinate L-citrulline: arginine 127, serine 176, serine 185, glutamate 261, and tyrosine 273.

This sequence belongs to the argininosuccinate synthase family. Type 1 subfamily. As to quaternary structure, homotetramer.

The protein localises to the cytoplasm. It catalyses the reaction L-citrulline + L-aspartate + ATP = 2-(N(omega)-L-arginino)succinate + AMP + diphosphate + H(+). It participates in amino-acid biosynthesis; L-arginine biosynthesis; L-arginine from L-ornithine and carbamoyl phosphate: step 2/3. This is Argininosuccinate synthase from Chlorobium phaeobacteroides (strain BS1).